We begin with the raw amino-acid sequence, 563 residues long: Chaperonin GroEL 1 (563 aa).

ATP contacts are provided by residues 29-32 (TIGP), 86-90 (DGTTT), Gly-413, and Asp-492. The tract at residues 520–541 (DKPEPPSAPGAEGGDPMGGMGG) is disordered. Gly residues predominate over residues 530-541 (AEGGDPMGGMGG).

This sequence belongs to the chaperonin (HSP60) family. Forms a cylinder of 14 subunits composed of two heptameric rings stacked back-to-back. Interacts with the co-chaperonin GroES.

The protein resides in the cytoplasm. It catalyses the reaction ATP + H2O + a folded polypeptide = ADP + phosphate + an unfolded polypeptide.. Its function is as follows. Together with its co-chaperonin GroES, plays an essential role in assisting protein folding. The GroEL-GroES system forms a nano-cage that allows encapsulation of the non-native substrate proteins and provides a physical environment optimized to promote and accelerate protein folding. This is Chaperonin GroEL 1 from Prochlorococcus marinus (strain NATL1A).